Reading from the N-terminus, the 143-residue chain is Small ribosomal subunit protein uS12 (143 aa).

Residues 1-19 show a composition bias toward basic residues; the sequence is MGKPKGIRAARKLKTHRQA. Positions 1 to 21 are disordered; that stretch reads MGKPKGIRAARKLKTHRQAQR. P62 is subject to Hydroxyproline.

This sequence belongs to the universal ribosomal protein uS12 family. Component of the 40S small ribosomal subunit.

The protein localises to the cytoplasm. Its subcellular location is the cytosol. It localises to the rough endoplasmic reticulum. This chain is Small ribosomal subunit protein uS12 (rps-23), found in Brugia malayi (Filarial nematode worm).